We begin with the raw amino-acid sequence, 619 residues long: Secretogranin-2 (619 aa).

The signal sequence occupies residues 1 to 30 (MTESKAYRFGAVLLLIHLIFLVPGTEAASF). Tyr153 carries the sulfotyrosine modification. Phosphoserine is present on residues Ser176 and Ser270. A disordered region spans residues 247–307 (VGGEDWSPME…RKESKDQLSE (61 aa)). 2 stretches are compositionally biased toward basic and acidic residues: residues 255–286 (MEEK…EMKR) and 295–307 (EGNR…QLSE). Phosphoserine occurs at positions 434, 534, 557, and 558.

It belongs to the chromogranin/secretogranin protein family. As to quaternary structure, interacts with Secretogranin III/SCG3. As to expression, brain. Expression in the pituitary is restricted to the anterior lobe. Expression in the hypothalamus is observed in the neuronal cells and neurons of arcuate nucleus, supraoptic nucleus and median eminence (at protein level).

Its subcellular location is the secreted. Its function is as follows. Neuroendocrine protein of the granin family that regulates the biogenesis of secretory granules. This is Secretogranin-2 (Scg2) from Rattus norvegicus (Rat).